The sequence spans 394 residues: Ribulose bisphosphate carboxylase large chain (394 aa).

Lys5 is modified (N6,N6,N6-trimethyllysine). Substrate contacts are provided by Asn114 and Thr164. The active-site Proton acceptor is Lys166. Lys168 serves as a coordination point for substrate. Mg(2+)-binding residues include Lys192, Asp194, and Glu195. Lys192 carries the N6-carboxylysine modification. Residue His285 is the Proton acceptor of the active site. The substrate site is built by Arg286, His318, and Ser370.

The protein belongs to the RuBisCO large chain family. Type I subfamily. As to quaternary structure, heterohexadecamer of 8 large chains and 8 small chains. Requires Mg(2+) as cofactor.

The protein localises to the plastid. It is found in the chloroplast. It catalyses the reaction 2 (2R)-3-phosphoglycerate + 2 H(+) = D-ribulose 1,5-bisphosphate + CO2 + H2O. The enzyme catalyses D-ribulose 1,5-bisphosphate + O2 = 2-phosphoglycolate + (2R)-3-phosphoglycerate + 2 H(+). In terms of biological role, ruBisCO catalyzes two reactions: the carboxylation of D-ribulose 1,5-bisphosphate, the primary event in carbon dioxide fixation, as well as the oxidative fragmentation of the pentose substrate in the photorespiration process. Both reactions occur simultaneously and in competition at the same active site. The protein is Ribulose bisphosphate carboxylase large chain (rbcL) of Nymphaea odorata (White water lily).